The sequence spans 475 residues: Aspartyl/glutamyl-tRNA(Asn/Gln) amidotransferase subunit B (475 aa).

It belongs to the GatB/GatE family. GatB subfamily. Heterotrimer of A, B and C subunits.

The catalysed reaction is L-glutamyl-tRNA(Gln) + L-glutamine + ATP + H2O = L-glutaminyl-tRNA(Gln) + L-glutamate + ADP + phosphate + H(+). It catalyses the reaction L-aspartyl-tRNA(Asn) + L-glutamine + ATP + H2O = L-asparaginyl-tRNA(Asn) + L-glutamate + ADP + phosphate + 2 H(+). Its function is as follows. Allows the formation of correctly charged Asn-tRNA(Asn) or Gln-tRNA(Gln) through the transamidation of misacylated Asp-tRNA(Asn) or Glu-tRNA(Gln) in organisms which lack either or both of asparaginyl-tRNA or glutaminyl-tRNA synthetases. The reaction takes place in the presence of glutamine and ATP through an activated phospho-Asp-tRNA(Asn) or phospho-Glu-tRNA(Gln). The chain is Aspartyl/glutamyl-tRNA(Asn/Gln) amidotransferase subunit B from Staphylococcus epidermidis (strain ATCC 12228 / FDA PCI 1200).